Consider the following 260-residue polypeptide: Late transcription factor 1 (260 aa).

It belongs to the chordopoxvirinae VLTF-1 family. In terms of assembly, interacts with the late transcription factors VLTF-2 and VLTF-3. Interacts with the late transcription elongation factor VLTF-4. Interacts with itself.

Associates with RNA polymerase to initiate transcription from late gene promoters. The chain is Late transcription factor 1 (OPG093) from Vaccinia virus (strain Ankara) (VACV).